A 328-amino-acid polypeptide reads, in one-letter code: Transcription initiation factor IIE subunit beta (328 aa).

Residues 32 to 105 form a disordered region; sequence QKKTNDTVIT…SSPSKKVRPG (74 aa). Residue serine 52 is modified to Phosphoserine. A compositionally biased stretch (acidic residues) spans 85-94; sequence LDDDDDDEDF. Residues serine 97 and serine 106 each carry the phosphoserine modification. Positions 113–187 form a DNA-binding region, TFIIE beta; the sequence is QANQTDISKS…FKYLSTYDVH (75 aa).

Belongs to the TFIIE beta subunit family. As to quaternary structure, TFIIE is a tetramer of two alpha (TFA1) and two beta (TFA2) subunits.

The protein localises to the nucleus. In terms of biological role, recruits TFIIH to the initiation complex and stimulates the RNA polymerase II C-terminal domain kinase and DNA-dependent ATPase activities of TFIIH. Both TFIIH and TFIIE are required for promoter clearance by RNA polymerase. This Saccharomyces cerevisiae (strain ATCC 204508 / S288c) (Baker's yeast) protein is Transcription initiation factor IIE subunit beta (TFA2).